The following is a 127-amino-acid chain: HTH-type transcriptional regulator ImmR (127 aa).

Residues 1–12 (MSLGKRLKEARQ) show a composition bias toward basic and acidic residues. Positions 1–22 (MSLGKRLKEARQKAGYTQKEAA) are disordered. The 55-residue stretch at 7–61 (LKEARQKAGYTQKEAAEKLNIGNNNLSNYERDYRDPDTDTLLKLSNLYNVSTDYL) folds into the HTH cro/C1-type domain. The segment at residues 18–37 (QKEAAEKLNIGNNNLSNYER) is a DNA-binding region (H-T-H motif).

The sequence is that of HTH-type transcriptional regulator ImmR (immR) from Bacillus subtilis (strain 168).